We begin with the raw amino-acid sequence, 78 residues long: MRSTTPINTTPINQLGYEACRDELIEVVRLLEQGGLNLDMSLKLWERGEQLAKRCEEHLDGARQRVADVLSARQVEEA.

The protein belongs to the XseB family. In terms of assembly, heterooligomer composed of large and small subunits.

The protein resides in the cytoplasm. It carries out the reaction Exonucleolytic cleavage in either 5'- to 3'- or 3'- to 5'-direction to yield nucleoside 5'-phosphates.. Its function is as follows. Bidirectionally degrades single-stranded DNA into large acid-insoluble oligonucleotides, which are then degraded further into small acid-soluble oligonucleotides. The chain is Exodeoxyribonuclease 7 small subunit from Mycobacterium leprae (strain TN).